Reading from the N-terminus, the 434-residue chain is 3-isopropylmalate dehydratase large subunit 1 (434 aa).

Cys-308, Cys-368, and Cys-371 together coordinate [4Fe-4S] cluster.

It belongs to the aconitase/IPM isomerase family. LeuC type 2 subfamily. As to quaternary structure, heterodimer of LeuC and LeuD. Requires [4Fe-4S] cluster as cofactor.

The enzyme catalyses (2R,3S)-3-isopropylmalate = (2S)-2-isopropylmalate. It participates in amino-acid biosynthesis; L-leucine biosynthesis; L-leucine from 3-methyl-2-oxobutanoate: step 2/4. Its function is as follows. Catalyzes the isomerization between 2-isopropylmalate and 3-isopropylmalate, via the formation of 2-isopropylmaleate. The sequence is that of 3-isopropylmalate dehydratase large subunit 1 from Deinococcus radiodurans (strain ATCC 13939 / DSM 20539 / JCM 16871 / CCUG 27074 / LMG 4051 / NBRC 15346 / NCIMB 9279 / VKM B-1422 / R1).